Here is a 230-residue protein sequence, read N- to C-terminus: RNA chaperone ProQ (230 aa).

Over residues 105 to 125 (EAKARVQAQREQHQAKKREAG) the composition is skewed to basic and acidic residues. A disordered region spans residues 105–182 (EAKARVQAQR…EQRKPVTDTT (78 aa)). Over residues 154 to 167 (PSRPQAARPASAPR) the composition is skewed to low complexity. The segment covering 168–178 (AESRVEQRKPV) has biased composition (basic and acidic residues).

This sequence belongs to the ProQ family.

The protein resides in the cytoplasm. In terms of biological role, RNA chaperone with significant RNA binding, RNA strand exchange and RNA duplexing activities. May regulate ProP activity through an RNA-based, post-transcriptional mechanism. This chain is RNA chaperone ProQ, found in Erwinia tasmaniensis (strain DSM 17950 / CFBP 7177 / CIP 109463 / NCPPB 4357 / Et1/99).